A 147-amino-acid chain; its full sequence is MASLRLFLLCLAGLVFVSEAGPAGAGESKCPLMVKVLDAVRGSPAVDVAVKVFKKTSEGSWEPFASGKTAESGELHGLTTDEKFVEGVYRVELDTKSYWKTLGISPFHEFADVVFTANDSGHRHYTIAALLSPYSYSTTAVVSNPQN.

The N-terminal stretch at 1 to 20 is a signal peptide; sequence MASLRLFLLCLAGLVFVSEA. A Sulfocysteine modification is found at C30. K35 serves as a coordination point for L-thyroxine. Residue E62 is modified to 4-carboxyglutamate. S72 is modified (phosphoserine). E74 contributes to the L-thyroxine binding site. An N-linked (GlcNAc...) asparagine glycan is attached at N118. S137 is a binding site for L-thyroxine.

The protein belongs to the transthyretin family. In terms of assembly, homotetramer. Dimer of dimers. In the homotetramer, subunits assemble around a central channel that can accommodate two ligand molecules. Interacts with RBP4. Sulfonation of the reactive cysteine Cys-30 enhances the stability of the native conformation of TTR, avoiding misassembly of the protein leading to amyloid formation. As to expression, detected in plasma (at protein level). Detected in liver.

The protein localises to the secreted. Functionally, thyroid hormone-binding protein. Probably transports thyroxine from the bloodstream to the brain. This Mus musculus (Mouse) protein is Transthyretin (Ttr).